The primary structure comprises 682 residues: Tail-specific protease (682 aa).

Residues 1-22 (MNTFFRLTALAGLLALAGQSFA) form the signal peptide. One can recognise a PDZ domain in the interval 238–322 (NTEMSLSLEG…SKVRLEILPA (85 aa)). Active-site charge relay system residues include Ser452, Asp463, and Lys477.

Belongs to the peptidase S41A family.

The protein resides in the cell inner membrane. It catalyses the reaction The enzyme shows specific recognition of a C-terminal tripeptide, Xaa-Yaa-Zaa, in which Xaa is preferably Ala or Leu, Yaa is preferably Ala or Tyr, and Zaa is preferably Ala, but then cleaves at a variable distance from the C-terminus. A typical cleavage is -Ala-Ala-|-Arg-Ala-Ala-Lys-Glu-Asn-Tyr-Ala-Leu-Ala-Ala.. Functionally, involved in the cleavage of a C-terminal peptide of 11 residues from the precursor form of penicillin-binding protein 3 (PBP3). May be involved in protection of the bacterium from thermal and osmotic stresses. The protein is Tail-specific protease (prc) of Salmonella typhimurium (strain LT2 / SGSC1412 / ATCC 700720).